Here is a 449-residue protein sequence, read N- to C-terminus: Ribulose bisphosphate carboxylase large chain (449 aa).

K5 carries the post-translational modification N6,N6,N6-trimethyllysine. Positions 114 and 164 each coordinate substrate. The active-site Proton acceptor is the K166. Position 168 (K168) interacts with substrate. Residues K192, D194, and E195 each contribute to the Mg(2+) site. An N6-carboxylysine modification is found at K192. H285 (proton acceptor) is an active-site residue. Substrate is bound by residues R286, H318, and S370.

Belongs to the RuBisCO large chain family. Type I subfamily. Heterohexadecamer of 8 large chains and 8 small chains; disulfide-linked. The disulfide link is formed within the large subunit homodimers. Mg(2+) serves as cofactor. Post-translationally, the disulfide bond which can form in the large chain dimeric partners within the hexadecamer appears to be associated with oxidative stress and protein turnover.

Its subcellular location is the plastid. The protein resides in the chloroplast. The enzyme catalyses 2 (2R)-3-phosphoglycerate + 2 H(+) = D-ribulose 1,5-bisphosphate + CO2 + H2O. It carries out the reaction D-ribulose 1,5-bisphosphate + O2 = 2-phosphoglycolate + (2R)-3-phosphoglycerate + 2 H(+). RuBisCO catalyzes two reactions: the carboxylation of D-ribulose 1,5-bisphosphate, the primary event in carbon dioxide fixation, as well as the oxidative fragmentation of the pentose substrate in the photorespiration process. Both reactions occur simultaneously and in competition at the same active site. In Zamioculcas zamiifolia (Aroid palm), this protein is Ribulose bisphosphate carboxylase large chain.